Consider the following 693-residue polypeptide: eEF1A lysine and N-terminal methyltransferase (693 aa).

The protein belongs to the methyltransferase superfamily.

The catalysed reaction is L-lysyl-[protein] + S-adenosyl-L-methionine = N(6)-methyl-L-lysyl-[protein] + S-adenosyl-L-homocysteine + H(+). The enzyme catalyses N(6)-methyl-L-lysyl-[protein] + S-adenosyl-L-methionine = N(6),N(6)-dimethyl-L-lysyl-[protein] + S-adenosyl-L-homocysteine + H(+). It catalyses the reaction N-terminal glycyl-L-lysyl-L-glutamyl-[protein] + 3 S-adenosyl-L-methionine = N-terminal N,N,N-trimethyl-glycyl-L-lysyl-L-glutamyl-[protein] + 3 S-adenosyl-L-homocysteine + 3 H(+). Dual methyltransferase that catalyzes methylation of elongation factor 1-alpha (eef1a1 and eef1a2) at two different positions, and is therefore involved in the regulation of mRNA translation. Via its C-terminus, methylates the N-terminus of eef1a1 and eef1a2. Via its N-terminus dimethylates lysine residues of eef1a1 and eef1a2. The sequence is that of eEF1A lysine and N-terminal methyltransferase (mettl13) from Xenopus laevis (African clawed frog).